The following is a 185-amino-acid chain: Lysozyme g (185 aa).

2 disulfide bridges follow: cysteine 4–cysteine 60 and cysteine 18–cysteine 29. The active site involves glutamate 73.

The protein belongs to the glycosyl hydrolase 23 family.

It is found in the secreted. It catalyses the reaction Hydrolysis of (1-&gt;4)-beta-linkages between N-acetylmuramic acid and N-acetyl-D-glucosamine residues in a peptidoglycan and between N-acetyl-D-glucosamine residues in chitodextrins.. This Cygnus atratus (Black swan) protein is Lysozyme g.